A 114-amino-acid chain; its full sequence is Prefoldin subunit 6 (114 aa).

N-acetylserine is present on Ser2.

It belongs to the prefoldin subunit beta family. As to quaternary structure, heterohexamer of two PFD-alpha type and four PFD-beta type subunits.

It is found in the nucleus. In terms of biological role, binds specifically to cytosolic chaperonin (c-CPN) and transfers target proteins to it. Binds to nascent polypeptide chain and promotes folding in an environment in which there are many competing pathways for nonnative proteins. The chain is Prefoldin subunit 6 (YKE2) from Saccharomyces cerevisiae (strain ATCC 204508 / S288c) (Baker's yeast).